We begin with the raw amino-acid sequence, 230 residues long: Cytidylate kinase (230 aa).

11-19 (GQSAAGKST) serves as a coordination point for ATP.

It belongs to the cytidylate kinase family. Type 1 subfamily.

It localises to the cytoplasm. It catalyses the reaction CMP + ATP = CDP + ADP. The enzyme catalyses dCMP + ATP = dCDP + ADP. This chain is Cytidylate kinase, found in Chloroflexus aggregans (strain MD-66 / DSM 9485).